Reading from the N-terminus, the 462-residue chain is NEDD8-activating enzyme E1 regulatory subunit (462 aa).

It belongs to the ubiquitin-activating E1 family. ULA1 subfamily. In terms of assembly, heterodimer of UBA3 and ULA1. The complex binds NEDD8 and UBC12.

The protein operates within protein modification; protein neddylation. Its function is as follows. Regulatory subunit of the dimeric UBA3-ULA1 E1 enzyme. E1 activates NEDD8/RUB1 by first adenylating its C-terminal glycine residue with ATP, thereafter linking this residue to the side chain of the catalytic cysteine, yielding a NEDD8-UBA3 thioester and free AMP. E1 finally transfers NEDD8 to the catalytic cysteine of UBC12. The polypeptide is NEDD8-activating enzyme E1 regulatory subunit (ULA1) (Saccharomyces cerevisiae (strain ATCC 204508 / S288c) (Baker's yeast)).